The following is a 63-amino-acid chain: MGSLSMWHWLIVLVIVLLLFGRGKIPELMGDVAKGIKSFKKGMTDEDAPETAKTVDHKADETK.

A helical membrane pass occupies residues 1–21; sequence MGSLSMWHWLIVLVIVLLLFG. Residues 43–63 form a disordered region; sequence MTDEDAPETAKTVDHKADETK. Residues 53–63 are compositionally biased toward basic and acidic residues; the sequence is KTVDHKADETK.

The protein belongs to the TatA/E family. The Tat system comprises two distinct complexes: a TatABC complex, containing multiple copies of TatA, TatB and TatC subunits, and a separate TatA complex, containing only TatA subunits. Substrates initially bind to the TatABC complex, which probably triggers association of the separate TatA complex to form the active translocon.

It localises to the cell inner membrane. Part of the twin-arginine translocation (Tat) system that transports large folded proteins containing a characteristic twin-arginine motif in their signal peptide across membranes. TatA could form the protein-conducting channel of the Tat system. The protein is Sec-independent protein translocase protein TatA of Rhizobium etli (strain ATCC 51251 / DSM 11541 / JCM 21823 / NBRC 15573 / CFN 42).